Consider the following 96-residue polypeptide: MNILGMKLFAHHKGGGSSANGRNSAGRRLGAKAGDGQTIHAGTIIYRQRGTKIHPGKNVGQGGDDTLFALVNGVVKFERLGKYKKQVSVYPAEEAK.

A disordered region spans residues 12–33 (HKGGGSSANGRNSAGRRLGAKA). The segment covering 19–28 (ANGRNSAGRR) has biased composition (low complexity).

It belongs to the bacterial ribosomal protein bL27 family.

The sequence is that of Large ribosomal subunit protein bL27 from Lactobacillus helveticus (strain DPC 4571).